The primary structure comprises 480 residues: Aspartyl/glutamyl-tRNA(Asn/Gln) amidotransferase subunit B (480 aa).

The protein belongs to the GatB/GatE family. GatB subfamily. In terms of assembly, heterotrimer of A, B and C subunits.

The catalysed reaction is L-glutamyl-tRNA(Gln) + L-glutamine + ATP + H2O = L-glutaminyl-tRNA(Gln) + L-glutamate + ADP + phosphate + H(+). The enzyme catalyses L-aspartyl-tRNA(Asn) + L-glutamine + ATP + H2O = L-asparaginyl-tRNA(Asn) + L-glutamate + ADP + phosphate + 2 H(+). In terms of biological role, allows the formation of correctly charged Asn-tRNA(Asn) or Gln-tRNA(Gln) through the transamidation of misacylated Asp-tRNA(Asn) or Glu-tRNA(Gln) in organisms which lack either or both of asparaginyl-tRNA or glutaminyl-tRNA synthetases. The reaction takes place in the presence of glutamine and ATP through an activated phospho-Asp-tRNA(Asn) or phospho-Glu-tRNA(Gln). The chain is Aspartyl/glutamyl-tRNA(Asn/Gln) amidotransferase subunit B from Caldicellulosiruptor bescii (strain ATCC BAA-1888 / DSM 6725 / KCTC 15123 / Z-1320) (Anaerocellum thermophilum).